The chain runs to 319 residues: Cell surface A33 antigen (319 aa).

An N-terminal signal peptide occupies residues 1–21 (MVGKMWPVLWTLCAVRVTVDA). Positions 22–134 (ISVETPQDVL…LEGNTKSRVR (113 aa)) constitute an Ig-like V-type domain. Topologically, residues 22–235 (ISVETPQDVL…VAVRSPSMNV (214 aa)) are extracellular. 3 cysteine pairs are disulfide-bonded: Cys-43–Cys-117, Cys-146–Cys-222, and Cys-162–Cys-211. Asn-112, Asn-200, and Asn-223 each carry an N-linked (GlcNAc...) asparagine glycan. The Ig-like C2-type domain occupies 140-227 (PPSKPECGIE…GTQFCNITVA (88 aa)). Residues 236 to 256 (ALYVGIAVGVVAALIIIGIII) form a helical membrane-spanning segment. The Cytoplasmic segment spans residues 257-319 (YCCCCRGKDD…GRESPDHLDQ (63 aa)). 2 stretches are compositionally biased toward basic and acidic residues: residues 267 to 295 (NTED…SRER) and 303 to 319 (QEEQ…HLDQ). The tract at residues 267–319 (NTEDKEDARPNREAYEEPPEQLRELSREREEEDDYRQEEQRSTGRESPDHLDQ) is disordered.

In terms of processing, N-glycosylated, contains approximately 8 kDa of N-linked carbohydrate. Palmitoylated. Expressed in normal gastrointestinal epithelium and in 95% of colon cancers.

It is found in the membrane. In terms of biological role, may play a role in cell-cell recognition and signaling. This is Cell surface A33 antigen (GPA33) from Homo sapiens (Human).